The chain runs to 1747 residues: Retroelement silencing factor 1 (1747 aa).

Lys216 participates in a covalent cross-link: Glycyl lysine isopeptide (Lys-Gly) (interchain with G-Cter in SUMO2). The residue at position 221 (Ser221) is a Phosphoserine. Positions 261-272 (TSAVPSQQYATQ) are enriched in polar residues. The disordered stretch occupies residues 261-280 (TSAVPSQQYATQTDKRPPPP). Residue Lys707 forms a Glycyl lysine isopeptide (Lys-Gly) (interchain with G-Cter in SUMO2) linkage. 3 disordered regions span residues 833-856 (PLTQ…NVNQ), 923-956 (PQKP…GFQK), and 1073-1101 (EGSV…KDPA). Positions 842 to 856 (ESTNGNSEVTPNVNQ) are enriched in polar residues. Over residues 937-956 (REPEKQLDNTTENKDFGFQK) the composition is skewed to basic and acidic residues. Polar residues predominate over residues 1073 to 1087 (EGSVGQQTTYQTSED). Positions 1089 to 1101 (TADKTSSDSKDPA) are enriched in basic and acidic residues. Lys1136 participates in a covalent cross-link: Glycyl lysine isopeptide (Lys-Gly) (interchain with G-Cter in SUMO2). Phosphoserine is present on Ser1145. The disordered stretch occupies residues 1200–1274 (EEKQKEQCSP…KSLPRTEQEL (75 aa)). Basic and acidic residues predominate over residues 1217–1226 (QGERTSDRDV). Thr1240 is modified (phosphothreonine). Positions 1242 to 1261 (PDGKSHFPELQDDSRKDTPK) are enriched in basic and acidic residues. At Ser1358 the chain carries Phosphoserine. Residues Lys1528 and Lys1636 each participate in a glycyl lysine isopeptide (Lys-Gly) (interchain with G-Cter in SUMO2) cross-link. A disordered region spans residues 1686-1716 (KRTQKDSQERDNVNSRLSKRSFSADGFEMLQ). The segment covering 1689–1698 (QKDSQERDNV) has biased composition (basic and acidic residues). Ser1708 carries the post-translational modification Phosphoserine. Lys1723 is covalently cross-linked (Glycyl lysine isopeptide (Lys-Gly) (interchain with G-Cter in SUMO2)). Ser1740 carries the phosphoserine modification.

As to quaternary structure, interacts with SETDB1.

The protein resides in the nucleus. In terms of biological role, plays a role in the regulation of imprinted gene expression, regulates repressive epigenetic modifications associated with SETDB1. Required for the recruitment or accumulation of SETDB1 to the endogenous retroviruses (ERVs) and maintenance of repressive chromatin configuration, contributing to a subset of the SETDB1-dependent ERV silencing in embryonic stem cells. The sequence is that of Retroelement silencing factor 1 from Homo sapiens (Human).